Reading from the N-terminus, the 217-residue chain is 7-cyano-7-deazaguanine synthase (217 aa).

Phe-10 to Leu-20 provides a ligand contact to ATP. Residues Cys-185, Cys-194, Cys-197, and Cys-200 each contribute to the Zn(2+) site.

It belongs to the QueC family. In terms of assembly, homodimer. The cofactor is Zn(2+).

The catalysed reaction is 7-carboxy-7-deazaguanine + NH4(+) + ATP = 7-cyano-7-deazaguanine + ADP + phosphate + H2O + H(+). The protein operates within purine metabolism; 7-cyano-7-deazaguanine biosynthesis. Functionally, catalyzes the ATP-dependent conversion of 7-carboxy-7-deazaguanine (CDG) to 7-cyano-7-deazaguanine (preQ(0)). This Streptococcus thermophilus (strain CNRZ 1066) protein is 7-cyano-7-deazaguanine synthase.